The sequence spans 133 residues: Large ribosomal subunit protein bL17 (133 aa).

It belongs to the bacterial ribosomal protein bL17 family. In terms of assembly, part of the 50S ribosomal subunit. Contacts protein L32.

This chain is Large ribosomal subunit protein bL17, found in Alteromonas mediterranea (strain DSM 17117 / CIP 110805 / LMG 28347 / Deep ecotype).